The following is a 1073-amino-acid chain: Envelopment polyprotein (1073 aa).

The first 19 residues, M1–G19, serve as a signal peptide directing secretion. At D20 to W453 the chain is on the lumenal side. C26 and C49 form a disulfide bridge. N-linked (GlcNAc...) asparagine; by host glycosylation is found at N33 and N63. Disulfide bonds link C143–C156, C180–C327, C206–C216, C258–C305, C266–C303, C274–C280, C287–C292, C349–C352, C356–C424, and C376–C381. The chain crosses the membrane as a helical span at residues L454 to L474. The golgi retention signal stretch occupies residues K475–I521. At K475–E535 the chain is on the cytoplasmic side. The tract at residues M536 to S562 is internal signal sequence for glycoprotein C. 10 disulfide bridges follow: C563-C604, C576-C586, C629-C725, C644-C841, C650-C698, C656-C705, C660-C687, C691-C696, C778-C793, and C809-C823. At C563–W1036 the chain is on the lumenal side. Residues C650–C656 form a fusion loop region. The interval C691 to C705 is fusion loop. Residues N853 and N914 are each glycosylated (N-linked (GlcNAc...) asparagine; by host). Intrachain disulfides connect C908–C978, C918–C921, and C943–C974. A glycan (N-linked (GlcNAc...) asparagine; by host) is linked at N936. Residues I1037–L1057 form a helical membrane-spanning segment. Residues F1058–A1073 lie on the Cytoplasmic side of the membrane.

The protein belongs to the phlebovirus envelope glycoprotein family. In terms of assembly, homodimer. Heterodimer with glycoprotein C. Homotrimer (postfusion). As to quaternary structure, heterodimer with glycoprotein N. In terms of processing, specific enzymatic cleavages in vivo yield mature proteins including glycoprotein C and glycoprotein N. Post-translationally, the cytoplasmic tail is Palmitoylated. Glycosylated. In terms of processing, palmitoylated.

The protein resides in the virion membrane. The protein localises to the host Golgi apparatus membrane. It localises to the host endoplasmic reticulum membrane. Structural component of the virion that interacts with glycoprotein C. It shields the hydrophobic fusion loops of the glycoprotein C, preventing premature fusion. The glycoprotein protrusions are arranged on an icosahedral lattice, with T=12 triangulation. They are able to attach the virion to the host cell receptor CD209/DC-SIGN and to promote fusion of membranes with the late endosome after clathrin-mediated endocytosis of the virion. Plays a role in the packaging of ribonucleoproteins during virus assembly. Functionally, structural component of the virion that interacts with glycoprotein N. Acts as a class II fusion protein that is activated upon acidification and subsequent repositioning of the glycoprotein N. The glycoprotein protrusions are arranged on an icosahedral lattice, with T=12 triangulation. They are able to attach the virion to the host cell receptor CD209/DC-SIGN and to promote fusion of membranes with the late endosome after clathrin-mediated endocytosis of the virion. The chain is Envelopment polyprotein from Dabie bandavirus (Severe fever with thrombocytopenia virus).